The primary structure comprises 411 residues: 1-deoxy-D-xylulose 5-phosphate reductoisomerase (411 aa).

Positions 11, 12, 13, 14, and 124 each coordinate NADPH. K125 contributes to the 1-deoxy-D-xylulose 5-phosphate binding site. An NADPH-binding site is contributed by E126. Residue D150 participates in Mn(2+) binding. S151, E152, S186, and H209 together coordinate 1-deoxy-D-xylulose 5-phosphate. E152 contacts Mn(2+). G215 serves as a coordination point for NADPH. 1-deoxy-D-xylulose 5-phosphate contacts are provided by S222, N227, K228, and E231. E231 lines the Mn(2+) pocket.

The protein belongs to the DXR family. The cofactor is Mg(2+). Requires Mn(2+) as cofactor.

It carries out the reaction 2-C-methyl-D-erythritol 4-phosphate + NADP(+) = 1-deoxy-D-xylulose 5-phosphate + NADPH + H(+). It functions in the pathway isoprenoid biosynthesis; isopentenyl diphosphate biosynthesis via DXP pathway; isopentenyl diphosphate from 1-deoxy-D-xylulose 5-phosphate: step 1/6. Functionally, catalyzes the NADPH-dependent rearrangement and reduction of 1-deoxy-D-xylulose-5-phosphate (DXP) to 2-C-methyl-D-erythritol 4-phosphate (MEP). This chain is 1-deoxy-D-xylulose 5-phosphate reductoisomerase, found in Psychrobacter sp. (strain PRwf-1).